Consider the following 132-residue polypeptide: Small ribosomal subunit protein uS8 (132 aa).

Belongs to the universal ribosomal protein uS8 family. As to quaternary structure, part of the 30S ribosomal subunit. Contacts proteins S5 and S12.

In terms of biological role, one of the primary rRNA binding proteins, it binds directly to 16S rRNA central domain where it helps coordinate assembly of the platform of the 30S subunit. In Aliarcobacter butzleri (strain RM4018) (Arcobacter butzleri), this protein is Small ribosomal subunit protein uS8.